The sequence spans 26 residues: Cytochrome c oxidase subunit 2 (26 aa).

It belongs to the cytochrome c oxidase subunit 2 family. As to quaternary structure, component of the cytochrome c oxidase (complex IV, CIV), a multisubunit enzyme composed of a catalytic core of 3 subunits and several supernumerary subunits. The complex exists as a monomer or a dimer and forms supercomplexes (SCs) in the inner mitochondrial membrane with ubiquinol-cytochrome c oxidoreductase (cytochrome b-c1 complex, complex III, CIII). Cu cation serves as cofactor.

The protein resides in the mitochondrion inner membrane. It catalyses the reaction 4 Fe(II)-[cytochrome c] + O2 + 8 H(+)(in) = 4 Fe(III)-[cytochrome c] + 2 H2O + 4 H(+)(out). Its function is as follows. Component of the cytochrome c oxidase, the last enzyme in the mitochondrial electron transport chain which drives oxidative phosphorylation. The respiratory chain contains 3 multisubunit complexes succinate dehydrogenase (complex II, CII), ubiquinol-cytochrome c oxidoreductase (cytochrome b-c1 complex, complex III, CIII) and cytochrome c oxidase (complex IV, CIV), that cooperate to transfer electrons derived from NADH and succinate to molecular oxygen, creating an electrochemical gradient over the inner membrane that drives transmembrane transport and the ATP synthase. Cytochrome c oxidase is the component of the respiratory chain that catalyzes the reduction of oxygen to water. Electrons originating from reduced cytochrome c in the intermembrane space (IMS) are transferred via the dinuclear copper A center (CU(A)) of subunit 2 and heme A of subunit 1 to the active site in subunit 1, a binuclear center (BNC) formed by heme A3 and copper B (CU(B)). The BNC reduces molecular oxygen to 2 water molecules using 4 electrons from cytochrome c in the IMS and 4 protons from the mitochondrial matrix. This Solanum tuberosum (Potato) protein is Cytochrome c oxidase subunit 2 (COX2).